Here is a 225-residue protein sequence, read N- to C-terminus: UPF0758 protein BCG9842_B0662 (225 aa).

Residues 103-225 form the MPN domain; sequence SIRSPEDCAK…FVSLKEKGHI (123 aa). Residues H174, H176, and D187 each coordinate Zn(2+). The JAMM motif motif lies at 174 to 187; it reads HNHPSGDPTPSRED.

It belongs to the UPF0758 family.

The sequence is that of UPF0758 protein BCG9842_B0662 from Bacillus cereus (strain G9842).